The primary structure comprises 60 residues: DNA-directed RNA polymerase subunit Rpo6 (60 aa).

This sequence belongs to the archaeal Rpo6/eukaryotic RPB6 RNA polymerase subunit family. Part of the RNA polymerase complex.

The protein localises to the cytoplasm. The catalysed reaction is RNA(n) + a ribonucleoside 5'-triphosphate = RNA(n+1) + diphosphate. Its function is as follows. DNA-dependent RNA polymerase (RNAP) catalyzes the transcription of DNA into RNA using the four ribonucleoside triphosphates as substrates. This Methanosarcina acetivorans (strain ATCC 35395 / DSM 2834 / JCM 12185 / C2A) protein is DNA-directed RNA polymerase subunit Rpo6.